A 213-amino-acid polypeptide reads, in one-letter code: Thiamine-phosphate synthase (213 aa).

4-amino-2-methyl-5-(diphosphooxymethyl)pyrimidine is bound by residues 38–42 (QLRIK) and N70. D71 and D90 together coordinate Mg(2+). S109 provides a ligand contact to 4-amino-2-methyl-5-(diphosphooxymethyl)pyrimidine. 135–137 (TQT) is a 2-[(2R,5Z)-2-carboxy-4-methylthiazol-5(2H)-ylidene]ethyl phosphate binding site. A 4-amino-2-methyl-5-(diphosphooxymethyl)pyrimidine-binding site is contributed by K138. Residues G168 and 188 to 189 (VS) each bind 2-[(2R,5Z)-2-carboxy-4-methylthiazol-5(2H)-ylidene]ethyl phosphate.

This sequence belongs to the thiamine-phosphate synthase family. It depends on Mg(2+) as a cofactor.

It carries out the reaction 2-[(2R,5Z)-2-carboxy-4-methylthiazol-5(2H)-ylidene]ethyl phosphate + 4-amino-2-methyl-5-(diphosphooxymethyl)pyrimidine + 2 H(+) = thiamine phosphate + CO2 + diphosphate. The enzyme catalyses 2-(2-carboxy-4-methylthiazol-5-yl)ethyl phosphate + 4-amino-2-methyl-5-(diphosphooxymethyl)pyrimidine + 2 H(+) = thiamine phosphate + CO2 + diphosphate. It catalyses the reaction 4-methyl-5-(2-phosphooxyethyl)-thiazole + 4-amino-2-methyl-5-(diphosphooxymethyl)pyrimidine + H(+) = thiamine phosphate + diphosphate. It participates in cofactor biosynthesis; thiamine diphosphate biosynthesis; thiamine phosphate from 4-amino-2-methyl-5-diphosphomethylpyrimidine and 4-methyl-5-(2-phosphoethyl)-thiazole: step 1/1. Condenses 4-methyl-5-(beta-hydroxyethyl)thiazole monophosphate (THZ-P) and 2-methyl-4-amino-5-hydroxymethyl pyrimidine pyrophosphate (HMP-PP) to form thiamine monophosphate (TMP). The polypeptide is Thiamine-phosphate synthase (Pectobacterium atrosepticum (strain SCRI 1043 / ATCC BAA-672) (Erwinia carotovora subsp. atroseptica)).